Consider the following 927-residue polypeptide: Perchlorate reductase subunit alpha (927 aa).

A signal peptide (tat-type signal) is located at residues 1–31; the sequence is MVQMTRRGFLLASGATLLGSSLSFRTLAAAA. Residues 53-116 form the 4Fe-4S Mo/W bis-MGD-type domain; the sequence is DKKTRGAHLI…CAHDYMYGPH (64 aa). Positions 60, 64, 68, and 102 each coordinate [4Fe-4S] cluster. Mo-bis(molybdopterin guanine dinucleotide) is bound at residue D198.

This sequence belongs to the prokaryotic molybdopterin-containing oxidoreductase family. In terms of assembly, heterotrimer of alpha, beta and gamma subunits. Requires [4Fe-4S] cluster as cofactor. The cofactor is Mo-bis(molybdopterin guanine dinucleotide). Post-translationally, predicted to be exported by the Tat system. The position of the signal peptide cleavage has not been experimentally proven.

The protein resides in the periplasm. Component of the perchlorate reductase that catalyzes the reduction of perchlorate to chlorite and allows anaerobic growth on perchlorate as the sole electron acceptor. Is probably also able to reduce chlorate to chlorite. The alpha subunit is likely the catalytic subunit. The chain is Perchlorate reductase subunit alpha (pcrA) from Dechloromonas aromatica (strain RCB).